The primary structure comprises 467 residues: Ammonium transporter Rh type C (467 aa).

Over 1–9 (MAWNTNLRW) the chain is Cytoplasmic. Residues 10-30 (RLPLLCLVLEVAMVVLFGLFV) form a helical membrane-spanning segment. Residues 31–61 (RYSPDADSSWSNEKRKGNITSDLENEFYYRY) lie on the Extracellular side of the membrane. Residue asparagine 48 is glycosylated (N-linked (GlcNAc...) asparagine). A helical transmembrane segment spans residues 62-82 (PSFQDVHVMVFLGFGFLMTFL). Over 83-86 (QRYG) the chain is Cytoplasmic. Residues 87–107 (YCALGFNFLLAALGVQWALLM) form a helical membrane-spanning segment. At 108 to 131 (QGWFQYTKDRLILLGIKNLIDADS) the chain is on the extracellular side. The next 2 helical transmembrane spans lie at 132–152 (CVAS…PVQM) and 153–173 (LLMT…LLHV). Residues 174–179 (LEVKDA) are Extracellular-facing. Residues 180 to 200 (GGSITIHIFGAYFGLTVTWIL) form a helical membrane-spanning segment. Topologically, residues 201 to 219 (YRHNLDHSRERQSSVYHSN) are cytoplasmic. The helical transmembrane segment at 220 to 240 (LFAMIGTLFLWIYWPSFNSAM) threads the bilayer. The Extracellular portion of the chain corresponds to 241–251 (SNYGDAQHRAA). Residues 252 to 272 (INTYCSLAASVLTSVAMSSVL) traverse the membrane as a helical segment. At 273 to 282 (HKKGKLDMVH) the chain is on the cytoplasmic side. Residues 283–303 (IQNATLAGGVGVGTAAEMMLM) traverse the membrane as a helical segment. Residue proline 304 is a topological domain, extracellular. A helical membrane pass occupies residues 305–325 (YGALIVGFICGAVSTLGFVYL). Residues 326–343 (TPFLESRLRIQDTCGIHN) are Cytoplasmic-facing. Residues 344–364 (LHGIPGLIGAIVGAVTAAYAS) traverse the membrane as a helical segment. Residues 365–391 (PDGDRGFVYPFGFHNEKDEKVQGRFQA) are Extracellular-facing. A helical transmembrane segment spans residues 392 to 412 (FGLLLTLAIAMVGGTIMGLIL). The Cytoplasmic segment spans residues 413–467 (KLPFWGQAMDEDCFDDSIYWEMHEEKSSSPEDHTHKPSVPTEPVEQPTSSATLAP). Over residues 436-447 (EEKSSSPEDHTH) the composition is skewed to basic and acidic residues. The disordered stretch occupies residues 436–467 (EEKSSSPEDHTHKPSVPTEPVEQPTSSATLAP). Over residues 458–467 (QPTSSATLAP) the composition is skewed to polar residues.

This sequence belongs to the ammonium transporter (TC 2.A.49) family. Rh subfamily. Homotrimer. N-glycosylated.

The protein resides in the cell membrane. It is found in the apical cell membrane. It catalyses the reaction NH4(+)(in) = NH4(+)(out). The catalysed reaction is methylamine(out) = methylamine(in). The enzyme catalyses CO2(out) = CO2(in). In terms of biological role, ammonium transporter involved in the maintenance of acid-base homeostasis. Transports ammonium and its related derivative methylammonium across the plasma membrane of epithelial cells likely contributing to renal transepithelial ammonia transport and ammonia metabolism. Postulated to primarily mediate an electroneutral bidirectional transport of NH3 ammonia species according to a mechanism that implies interaction of an NH4(+) ion with acidic residues of the pore entry followed by dissociation of NH4(+) into NH3 and H(+). As a result NH3 transits through the central pore and is protonated on the extracellular side reforming NH4(+). May act as a CO2 channel providing for renal acid secretion. The polypeptide is Ammonium transporter Rh type C (RHCG) (Oryctolagus cuniculus (Rabbit)).